Reading from the N-terminus, the 144-residue chain is Putative pre-16S rRNA nuclease (144 aa).

It belongs to the YqgF nuclease family.

The protein localises to the cytoplasm. Could be a nuclease involved in processing of the 5'-end of pre-16S rRNA. In Blochmanniella pennsylvanica (strain BPEN), this protein is Putative pre-16S rRNA nuclease.